An 80-amino-acid chain; its full sequence is Cell division activator CedA (80 aa).

It belongs to the CedA family.

Its function is as follows. Activates the cell division inhibited by chromosomal DNA over-replication. In Escherichia coli O1:K1 / APEC, this protein is Cell division activator CedA.